The chain runs to 346 residues: Selenide, water dikinase (346 aa).

Sec-17 is a catalytic residue. A non-standard amino acid (selenocysteine) is located at residue Sec-17. ATP contacts are provided by residues Lys-20 and 47–49 (TSD). Position 50 (Asp-50) interacts with Mg(2+). ATP-binding positions include Asp-67, Asp-90, and 138–140 (GHT). Asp-90 is a binding site for Mg(2+). Asp-226 contributes to the Mg(2+) binding site.

It belongs to the selenophosphate synthase 1 family. Class I subfamily. In terms of assembly, homodimer. Mg(2+) is required as a cofactor.

It carries out the reaction hydrogenselenide + ATP + H2O = selenophosphate + AMP + phosphate + 2 H(+). Functionally, synthesizes selenophosphate from selenide and ATP. This is Selenide, water dikinase from Trichlorobacter lovleyi (strain ATCC BAA-1151 / DSM 17278 / SZ) (Geobacter lovleyi).